The following is a 115-amino-acid chain: MNLMITLLTNFTLATLLVTIAFWLPQLNVYSEKTSPYECGFDPMGSARLPFSMKFFLVAITFLLFDLEIALLLPLPWASQTTNLNTMLTMALLLIFLLAVSLAYEWTQKGLEWTE.

The next 3 helical transmembrane spans lie at 3–23 (LMIT…IAFW), 55–75 (FFLV…LLPL), and 84–104 (LNTM…SLAY).

It belongs to the complex I subunit 3 family. As to quaternary structure, core subunit of respiratory chain NADH dehydrogenase (Complex I) which is composed of 45 different subunits. Interacts with TMEM186. Interacts with TMEM242.

It is found in the mitochondrion inner membrane. The enzyme catalyses a ubiquinone + NADH + 5 H(+)(in) = a ubiquinol + NAD(+) + 4 H(+)(out). Its function is as follows. Core subunit of the mitochondrial membrane respiratory chain NADH dehydrogenase (Complex I) which catalyzes electron transfer from NADH through the respiratory chain, using ubiquinone as an electron acceptor. Essential for the catalytic activity of complex I. This Ovis aries (Sheep) protein is NADH-ubiquinone oxidoreductase chain 3.